A 229-amino-acid chain; its full sequence is DNA repair protein RecO (229 aa).

The protein belongs to the RecO family.

Its function is as follows. Involved in DNA repair and RecF pathway recombination. This Legionella pneumophila (strain Lens) protein is DNA repair protein RecO.